A 249-amino-acid chain; its full sequence is ATP synthase subunit a (249 aa).

6 helical membrane-spanning segments follow: residues 30-50 (QSPV…YVGM), 86-106 (FFPF…LGLL), 115-135 (HIAV…IVSL), 142-162 (FFAH…LVPI), 191-211 (MFAA…VLAV), and 218-238 (VALM…FAIL).

This sequence belongs to the ATPase A chain family. As to quaternary structure, F-type ATPases have 2 components, CF(1) - the catalytic core - and CF(0) - the membrane proton channel. CF(1) has five subunits: alpha(3), beta(3), gamma(1), delta(1), epsilon(1). CF(0) has three main subunits: a(1), b(2) and c(9-12). The alpha and beta chains form an alternating ring which encloses part of the gamma chain. CF(1) is attached to CF(0) by a central stalk formed by the gamma and epsilon chains, while a peripheral stalk is formed by the delta and b chains.

It is found in the cell inner membrane. In terms of biological role, key component of the proton channel; it plays a direct role in the translocation of protons across the membrane. This is ATP synthase subunit a from Gluconacetobacter diazotrophicus (strain ATCC 49037 / DSM 5601 / CCUG 37298 / CIP 103539 / LMG 7603 / PAl5).